Reading from the N-terminus, the 182-residue chain is ADP-ribosylation factor 1 (182 aa).

The N-myristoyl glycine moiety is linked to residue Gly-2. Residues Asn-3–Lys-16 are important for the stable binding to the membranes. GTP contacts are provided by residues Gly-24–Thr-32, Asn-126–Asp-129, and Ala-160.

The protein belongs to the small GTPase superfamily. Arf family.

Its subcellular location is the golgi apparatus membrane. It localises to the cytoplasm. The protein localises to the cytosol. It carries out the reaction GTP + H2O = GDP + phosphate + H(+). Alternates between an inactive GDP-bound form and an active GTP-bound form. Activated by a guanine nucleotide-exchange factor (GEF) and inactivated by GTPase-activating protein (GAP). In terms of biological role, small GTPase involved in protein trafficking between different compartments. Modulates vesicle budding and uncoating within the Golgi complex. In its GTP-bound form, triggers the recruitment of coatomer proteins to the Golgi membrane. The hydrolysis of ARF1-bound GTP, which is mediated by ARFGAPs proteins, is required for dissociation of coat proteins from Golgi membranes and vesicles. Has a role in eye development. Required for cleavage furrow ingression in embryonic cells. This Drosophila melanogaster (Fruit fly) protein is ADP-ribosylation factor 1.